A 300-amino-acid polypeptide reads, in one-letter code: Protoheme IX farnesyltransferase (300 aa).

Transmembrane regions (helical) follow at residues 24–44 (VTQL…PGMV), 48–68 (VLLG…AINC), 94–114 (LQIL…LYTF), 118–138 (LTIW…TLLL), 146–166 (IVIG…AVTG), 172–192 (AWIL…VLAL), 217–237 (LHIL…FISG), 239–259 (SGAV…AYAW), and 278–298 (IVYL…RPVI).

This sequence belongs to the UbiA prenyltransferase family. Protoheme IX farnesyltransferase subfamily.

It is found in the cell inner membrane. The enzyme catalyses heme b + (2E,6E)-farnesyl diphosphate + H2O = Fe(II)-heme o + diphosphate. Its pathway is porphyrin-containing compound metabolism; heme O biosynthesis; heme O from protoheme: step 1/1. Functionally, converts heme B (protoheme IX) to heme O by substitution of the vinyl group on carbon 2 of heme B porphyrin ring with a hydroxyethyl farnesyl side group. The polypeptide is Protoheme IX farnesyltransferase (Burkholderia mallei (strain NCTC 10247)).